Here is a 130-residue protein sequence, read N- to C-terminus: Sec-independent protein translocase protein TatB (130 aa).

A helical membrane pass occupies residues 1 to 21 (MFDIGFWELVLIFVVGLVVLG). The tract at residues 85–130 (LKQAAQSVNRPYADVSAKNEATSSSSSDATHQTEATKTSAANTKSE) is disordered. Over residues 112-130 (DATHQTEATKTSAANTKSE) the composition is skewed to polar residues.

It belongs to the TatB family. As to quaternary structure, the Tat system comprises two distinct complexes: a TatABC complex, containing multiple copies of TatA, TatB and TatC subunits, and a separate TatA complex, containing only TatA subunits. Substrates initially bind to the TatABC complex, which probably triggers association of the separate TatA complex to form the active translocon.

It is found in the cell inner membrane. In terms of biological role, part of the twin-arginine translocation (Tat) system that transports large folded proteins containing a characteristic twin-arginine motif in their signal peptide across membranes. Together with TatC, TatB is part of a receptor directly interacting with Tat signal peptides. TatB may form an oligomeric binding site that transiently accommodates folded Tat precursor proteins before their translocation. The protein is Sec-independent protein translocase protein TatB of Vibrio vulnificus (strain CMCP6).